The primary structure comprises 563 residues: Cystathionine gamma-synthase 1, chloroplastic (563 aa).

A chloroplast-targeting transit peptide spans 1-68; it reads MAVSSFQCPT…SRILRFPPNF (68 aa). Residues Y226, R228, G256, M257, Y281, S376, and T378 each coordinate pyridoxal 5'-phosphate. K379 is modified (N6-(pyridoxal phosphate)lysine).

The protein belongs to the trans-sulfuration enzymes family. It depends on pyridoxal 5'-phosphate as a cofactor.

Its subcellular location is the plastid. It localises to the chloroplast. The catalysed reaction is O-phospho-L-homoserine + L-cysteine = L,L-cystathionine + phosphate. It catalyses the reaction O-succinyl-L-homoserine + L-cysteine = L,L-cystathionine + succinate + H(+). It functions in the pathway amino-acid biosynthesis; L-methionine biosynthesis via de novo pathway; L-cystathionine from O-succinyl-L-homoserine: step 1/1. Inhibited by propargylglycine. Catalyzes the first committed step of methionine (Met) biosynthesis. Catalyzes the formation of L-cystathionine from homoserine esters and L-cysteine, via a gamma-replacement reaction. Substrate preference for cystathionine synthesis is O-phospho-L-homoserine (OPH) &gt; O(4)-succinyl-L-homoserine (OSH) &gt;&gt; O-acetyl-L-homoserine (OAH). Is able, at extremely low rate, to catalyze a gamma-elimination of OPH in the absence of cysteine to produce inorganic phosphate (Pi), 2-oxobutanoate and ammonia. The chain is Cystathionine gamma-synthase 1, chloroplastic from Arabidopsis thaliana (Mouse-ear cress).